Reading from the N-terminus, the 154-residue chain is Putative pre-16S rRNA nuclease (154 aa).

The protein belongs to the YqgF nuclease family.

It is found in the cytoplasm. In terms of biological role, could be a nuclease involved in processing of the 5'-end of pre-16S rRNA. This Rickettsia africae (strain ESF-5) protein is Putative pre-16S rRNA nuclease.